The sequence spans 145 residues: D-aminoacyl-tRNA deacylase (145 aa).

The short motif at 137-138 (GP) is the Gly-cisPro motif, important for rejection of L-amino acids element.

It belongs to the DTD family. Homodimer.

It is found in the cytoplasm. The enzyme catalyses glycyl-tRNA(Ala) + H2O = tRNA(Ala) + glycine + H(+). It carries out the reaction a D-aminoacyl-tRNA + H2O = a tRNA + a D-alpha-amino acid + H(+). In terms of biological role, an aminoacyl-tRNA editing enzyme that deacylates mischarged D-aminoacyl-tRNAs. Also deacylates mischarged glycyl-tRNA(Ala), protecting cells against glycine mischarging by AlaRS. Acts via tRNA-based rather than protein-based catalysis; rejects L-amino acids rather than detecting D-amino acids in the active site. By recycling D-aminoacyl-tRNA to D-amino acids and free tRNA molecules, this enzyme counteracts the toxicity associated with the formation of D-aminoacyl-tRNA entities in vivo and helps enforce protein L-homochirality. The polypeptide is D-aminoacyl-tRNA deacylase (Pseudoalteromonas translucida (strain TAC 125)).